Here is a 552-residue protein sequence, read N- to C-terminus: Arginine--tRNA ligase (552 aa).

The 'HIGH' region motif lies at G124 to H134.

This sequence belongs to the class-I aminoacyl-tRNA synthetase family. In terms of assembly, monomer.

It localises to the cytoplasm. It carries out the reaction tRNA(Arg) + L-arginine + ATP = L-arginyl-tRNA(Arg) + AMP + diphosphate. The polypeptide is Arginine--tRNA ligase (Tropheryma whipplei (strain Twist) (Whipple's bacillus)).